We begin with the raw amino-acid sequence, 279 residues long: MKVISSIQELRDQLRGQNRTAFVPTMGNLHDGHLSLMRLARQHGDPVVASIFVNRLQFGPNEDFDQYPRTLQDDIEKLQKENVYVLFAPTERDMYPEPQEYRVQPPHDLGDILEGEFRPGFFTGVCTVVTKLMACVQPRVAVFGKKDYQQLMIVRRMCQQLALPVEIIAAETVRDADGLALSSRNRYLSEAERAEAPELAKTLAQVRSAVLGGERDLAAIEQRALAHLAARGWKPDYVSIRRRANLVAPSAAHIEAGEPLVVLTAAKLGATRLIDNLEI.

26–33 (MGNLHDGH) is a binding site for ATP. The active-site Proton donor is the His33. Gln57 is a (R)-pantoate binding site. A beta-alanine-binding site is contributed by Gln57. 144-147 (GKKD) contributes to the ATP binding site. Residue Gln150 participates in (R)-pantoate binding. ATP is bound by residues Val173 and 181–184 (LSSR).

Belongs to the pantothenate synthetase family. Homodimer.

It localises to the cytoplasm. It carries out the reaction (R)-pantoate + beta-alanine + ATP = (R)-pantothenate + AMP + diphosphate + H(+). Its pathway is cofactor biosynthesis; (R)-pantothenate biosynthesis; (R)-pantothenate from (R)-pantoate and beta-alanine: step 1/1. Functionally, catalyzes the condensation of pantoate with beta-alanine in an ATP-dependent reaction via a pantoyl-adenylate intermediate. This chain is Pantothenate synthetase, found in Burkholderia mallei (strain NCTC 10229).